The following is a 433-amino-acid chain: Oxidoreductase acuF (433 aa).

It participates in secondary metabolite biosynthesis. In terms of biological role, oxidoreductase; part of the gene cluster that mediates the biosynthesis of aculins. The pathway begins with the synthesis of 6-methylsalicylic acid by the polyketide synthase (PKS) acuA via condensation of acetate and malonate units. The 6-methylsalicylic acid decarboxylase acuB then catalyzes the decarboxylation of 6-methylsalicylic acid to yield m-cresol (also known as 3-methylphenol). These first reactions occur in the cytosol. The intermediate m-cresol is then transported into the endoplasmic reticulum where the cytochrome P450 monooxygenase acuC converts it to m-hydroxybenzyl alcohol, which is further converted to gentisyl alcohol by the cytochrome P450 monooxygenase acuD. Gentisyl alcohol is further oxidized by the oxidoreductase acuE that probably catalyzes hydroxylation of the aromatic ring. The aromatic system might then be opened by oxidation through a Baeyer-Villiger type of oxidation, which could be catalyzed by acuF, with the carboxylic acid at C-1 subsequently reduced to an aldehyde by acuG. Subsequently, a hemiacetal is formed, before the dehydrogenase acuH would reduce the double bond between C-4 and C-6. Finally, keto-enol tautomerism results in formation of aculinic acid, which exists as two diastereomers (both R/S configurations at C-1) by non-enzymatic hemiacetal formation. The carboxypeptidase acuI could be involved in the linking of aculinic acid to an aculene A moiety produced by the aculene biosynthesis cluster and which leads to the production of aculin A. AcuI may also be involved in the attachment of proline to aculinic acid to form epi-aculins A and B. The chain is Oxidoreductase acuF from Aspergillus aculeatus (strain ATCC 16872 / CBS 172.66 / WB 5094).